Here is a 552-residue protein sequence, read N- to C-terminus: Arginine--tRNA ligase (552 aa).

The 'HIGH' region signature appears at 124–134 (GNPTGPLHLAH).

This sequence belongs to the class-I aminoacyl-tRNA synthetase family. Monomer.

It is found in the cytoplasm. The enzyme catalyses tRNA(Arg) + L-arginine + ATP = L-arginyl-tRNA(Arg) + AMP + diphosphate. The chain is Arginine--tRNA ligase from Tropheryma whipplei (strain Twist) (Whipple's bacillus).